A 1226-amino-acid chain; its full sequence is DNA-directed RNA polymerase subunit beta'' (1226 aa).

Residues Cys223, Cys297, Cys304, and Cys307 each contribute to the Zn(2+) site.

This sequence belongs to the RNA polymerase beta' chain family. RpoC2 subfamily. In terms of assembly, in plastids the minimal PEP RNA polymerase catalytic core is composed of four subunits: alpha, beta, beta', and beta''. When a (nuclear-encoded) sigma factor is associated with the core the holoenzyme is formed, which can initiate transcription. The cofactor is Zn(2+).

Its subcellular location is the plastid. It localises to the chloroplast. The enzyme catalyses RNA(n) + a ribonucleoside 5'-triphosphate = RNA(n+1) + diphosphate. Functionally, DNA-dependent RNA polymerase catalyzes the transcription of DNA into RNA using the four ribonucleoside triphosphates as substrates. In Pyropia yezoensis (Susabi-nori), this protein is DNA-directed RNA polymerase subunit beta''.